We begin with the raw amino-acid sequence, 184 residues long: Protein PPLZ12 (184 aa).

The polypeptide is Protein PPLZ12 (PPLZ12) (Lupinus polyphyllus (Large-leaved lupine)).